Here is a 591-residue protein sequence, read N- to C-terminus: ADP-ribosylating toxin CARDS (591 aa).

Residues 1–205 (MPNPVRFVYR…LPTPGIATPV (205 aa)) form a mono-ADP ribosyltransferase (mART) domain region. The interval 206 to 256 (HLSIPQAASVADVSEGTSASLSFACPDWSPPSSNGENPLDKCIAEKIDNYN) is NAD(+)-binding pocket. A disulfide bond links C230 and C247. A KELED motif, involved in host ER trafficking, solvent exposed in the crystal structure motif is present at residues 268 to 272 (KELED). The interval 273-439 (TPVYLRGIKT…QFVTMRAAST (167 aa)) is D2 domain. A D3 domain region spans residues 440 to 591 (FFVDVQLGWY…ILVKDGFDRF (152 aa)).

The protein belongs to the bacterial exotoxin subunit A family. In terms of assembly, monomer. Binds to host (human) pulmonary surfactant-associated protein A1 (SFTPA1), the major mammalian protein component of pulmonary surfactant. Binds to host (human) surface annexin A2 (ANXA2) on the cell surface; anti-ANXA2 antibodies decrease binding to cells. Interacts with cytosolic host (human) NLRP3, which it ADP-ribosylates in vitro. 8 hours after treatment of HeLa cells with purified protein, a substantial amount is processed to 2 nearly equal-sized fragments. The disulfide bond between Cys-230 and Cys-247 is required to for the toxin to exert its mART and vacuolating activities within target cells, and for protein processing. Acidic pH in the endosome and retrograde transport are required for toxin cleavage, which is required for both toxin activities. Trypsin treatment under mild conditions leads to cleavage at Lys-305 and Lys-307; the 2 proteins fragments remain associated and can be internalized and vacuolate HeLa cells.

The protein resides in the cell membrane. It localises to the cytoplasm. The protein localises to the cell surface. It is found in the cell projection. Its subcellular location is the attachment organelle. The protein resides in the host cytoplasm. It localises to the host cytosol. The protein localises to the host endoplasmic reticulum. Its activity is regulated as follows. In vitro ADP-ribosylation is enhanced by dithiotheritol. Functionally, the main virulence factor for this bacteria, a mono-ADP-ribosylating toxin (mART), that transfers the ADP-ribosyl group from NAD(+) to multiple target proteins in vitro. Also elicits cytopathic effects in mammalian cells, such as disorganization and disruption of respiratory epithelial integrity in tracheal epithelium and vacuolization in the cytoplasm of CHO and HeLa cells as well as in mice and baboons. Treatment of mice or baboons with CARDS elicits a response that is consistent with human M.pneumoniae infections and mouse models of both infection and intoxication, suggesting that CARDS toxin is sufficient to cause prolonged inflammatory responses and airway dysfunction. Treatment of baboons with CARDS induces a number of cytokines; G-CSF (40 fold), IL-1Ra (10 fold), IL-6 and IL-8 (333 and 100 fold, respectively), MIP-1a (5 fold), and RANTES (9 fold). Treatment of mice gives a similar response. Binds phosphatidyl choline, dipalmitoylphosphatidylcholine (DPPC) and sphingomyelin via domains D2 plus D3. Has at least 2 host receptors SFTPA1 and ANXA2. Internalized by a clathrin-mediated process; protein is rapidly taken up at 37 degrees Celsius. Clathrin-independent or caveolin-dependent endocytosis were not detected. In HeLa cells internalized CARDS trafficks toward the nucleus by retrograde transport from early to late endosomes, then the Golgi apparatus; at 16 hours most toxin is concentrated in the perinuclear region in the host endoplasmic reticulum (ER). Failure to localize to the host ER prevents ADP-ribosylation and vacuolization. An acidic compartment is required to mediate retrotransport and processing of toxin into an N-terminal fragment with mART activity and a C-terminal fragment that is able to induce vacuolization. Its function is as follows. Induces the host NLRP3 inflammasome to release interleukin-1 beta (IL-1 beta); IL-1 beta release requires ADP-ribosylation activity and uptake by host macrophages. In the host colocalizes with the NLRP3 inflammasome; ADP-ribosylates NLRP3 in vitro. ADP-ribosylation of NLRP3 may lead to hyperinflammation. The protein is ADP-ribosylating toxin CARDS of Mycoplasma pneumoniae (strain ATCC 29342 / M129 / Subtype 1) (Mycoplasmoides pneumoniae).